Here is a 396-residue protein sequence, read N- to C-terminus: Ribosomal RNA large subunit methyltransferase I (396 aa).

In terms of domain architecture, PUA spans 2–79 (TSAVYLQAGR…EKEVIDQHFF (78 aa)).

It belongs to the methyltransferase superfamily. RlmI family.

The protein localises to the cytoplasm. The catalysed reaction is cytidine(1962) in 23S rRNA + S-adenosyl-L-methionine = 5-methylcytidine(1962) in 23S rRNA + S-adenosyl-L-homocysteine + H(+). Specifically methylates the cytosine at position 1962 (m5C1962) of 23S rRNA. This Pseudoalteromonas translucida (strain TAC 125) protein is Ribosomal RNA large subunit methyltransferase I.